A 158-amino-acid chain; its full sequence is Transcription elongation factor GreA (158 aa).

This sequence belongs to the GreA/GreB family.

Necessary for efficient RNA polymerase transcription elongation past template-encoded arresting sites. The arresting sites in DNA have the property of trapping a certain fraction of elongating RNA polymerases that pass through, resulting in locked ternary complexes. Cleavage of the nascent transcript by cleavage factors such as GreA or GreB allows the resumption of elongation from the new 3'terminus. GreA releases sequences of 2 to 3 nucleotides. The sequence is that of Transcription elongation factor GreA from Rhizobium leguminosarum bv. trifolii (strain WSM2304).